Here is a 626-residue protein sequence, read N- to C-terminus: Janus kinase and microtubule-interacting protein 1 (626 aa).

The segment at 1-365 is mediates association with microtubules; it reads MSKKGRSKGE…KIKNLTRENV (365 aa). Coiled coils occupy residues 19-254 and 284-413; these read VQMA…REAE and ERDV…DDLS. The tract at residues 365-626 is mediates interaction with TYK2 and GABBR1; the sequence is VEMKEKLSAQ…ILFEPKLKFM (262 aa). S382 carries the phosphoserine modification. Over residues 452–461 the composition is skewed to polar residues; it reads ETLSETSCNT. The disordered stretch occupies residues 452–480; it reads ETLSETSCNTDRTDRAPATPEEDLDDTTT. Position 470 is a phosphothreonine (T470). A coiled-coil region spans residues 490 to 604; that stretch reads QLTREYQALQ…EFRVLELEVR (115 aa).

The protein belongs to the JAKMIP family. In terms of assembly, homodimer. Forms a complex with GABBR1 and KIF5B/kinesin-1. Interacts with JAK1 and TYK2. In terms of processing, phosphorylated.

It localises to the cytoplasm. Its subcellular location is the cytoskeleton. It is found in the membrane. In terms of biological role, associates with microtubules and may play a role in the microtubule-dependent transport of the GABA-B receptor. May play a role in JAK1 signaling and regulate microtubule cytoskeleton rearrangements. The chain is Janus kinase and microtubule-interacting protein 1 (JAKMIP1) from Bos taurus (Bovine).